The following is a 246-amino-acid chain: Carboxy-S-adenosyl-L-methionine synthase (246 aa).

S-adenosyl-L-methionine is bound by residues Tyr43, 68 to 70 (GCS), 93 to 94 (DN), 121 to 122 (DI), Asn136, and Arg203.

Belongs to the class I-like SAM-binding methyltransferase superfamily. Cx-SAM synthase family. Homodimer.

The catalysed reaction is prephenate + S-adenosyl-L-methionine = carboxy-S-adenosyl-L-methionine + 3-phenylpyruvate + H2O. Functionally, catalyzes the conversion of S-adenosyl-L-methionine (SAM) to carboxy-S-adenosyl-L-methionine (Cx-SAM). In Vibrio cholerae serotype O1 (strain ATCC 39541 / Classical Ogawa 395 / O395), this protein is Carboxy-S-adenosyl-L-methionine synthase.